Consider the following 100-residue polypeptide: Large ribosomal subunit protein uL23 (100 aa).

This sequence belongs to the universal ribosomal protein uL23 family. In terms of assembly, part of the 50S ribosomal subunit. Contacts protein L29, and trigger factor when it is bound to the ribosome.

In terms of biological role, one of the early assembly proteins it binds 23S rRNA. One of the proteins that surrounds the polypeptide exit tunnel on the outside of the ribosome. Forms the main docking site for trigger factor binding to the ribosome. This Baumannia cicadellinicola subsp. Homalodisca coagulata protein is Large ribosomal subunit protein uL23.